We begin with the raw amino-acid sequence, 192 residues long: UPF0301 protein Bcep18194_A3962 (192 aa).

It belongs to the UPF0301 (AlgH) family.

In Burkholderia lata (strain ATCC 17760 / DSM 23089 / LMG 22485 / NCIMB 9086 / R18194 / 383), this protein is UPF0301 protein Bcep18194_A3962.